We begin with the raw amino-acid sequence, 382 residues long: Norsolorinic acid reductase B (382 aa).

Asp-64 serves as a coordination point for NADP(+). The active-site Proton donor is the Tyr-69. His-143 serves as a coordination point for substrate. NADP(+) contacts are provided by residues 173 to 174, Gln-199, 228 to 238, and 302 to 310; these read SD, GVLNQGRFRTE, and RKVDHLTGV.

Belongs to the aldo/keto reductase family. Aldo/keto reductase 2 subfamily.

It participates in mycotoxin biosynthesis; aflatoxin biosynthesis. Its function is as follows. Norsolorinic acid reductase; part of the gene cluster that mediates the biosynthesis of aflatoxins, a group of polyketide-derived furanocoumarins, and part of the most toxic and carcinogenic compounds among the known mycotoxins. The four major aflatoxins produced by A.parasiticus are aflatoxin B1 (AFB1), aflatoxin B2 (AFB2), aflatoxin G1 (AFG1) and aflatoxin G2 (AFG2). Within the aflatoxin pathway, the norsolorinic acid reductase aflE may play a role in the conversion of norsolorinic acid (NOR) to averantin (AVN). The biosynthesis of aflatoxins begins with the norsolorinic acid synthase aflC that combines a hexanoyl starter unit produced by the fatty acid synthase aflA/aflB and 7 malonyl-CoA extender units to synthesize the precursor NOR. The second step is the conversion of NOR to averantin and requires the norsolorinic acid ketoreductase aflD, which catalyzes the dehydration of norsolorinic acid to form (1'S)-averantin. The norsolorinic acid reductases aflE and aflF may also play a role in the conversion of NOR to AVN. The cytochrome P450 monooxygenase aflG then catalyzes the hydroxylation of AVN to 5'hydroxyaverantin (HAVN). The next step is performed by the 5'-hydroxyaverantin dehydrogenase aflH that transforms HAVN to 5'-oxoaverantin (OAVN) which is further converted to averufin (AVF) by aflK that plays a dual role in the pathway, as a 5'-oxoaverantin cyclase that mediates conversion of 5'-oxoaverantin, as well as a versicolorin B synthase in a later step in the pathway. The averufin oxidase aflI catalyzes the conversion of AVF to versiconal hemiacetal acetate (VHA). VHA is then the substrate for the versiconal hemiacetal acetate esterase aflJ to yield versiconal (VAL). Versicolorin B synthase aflK then converts VAL to versicolorin B (VERB) by closing the bisfuran ring of aflatoxin which is required for DNA-binding, thus giving to aflatoxin its activity as a mutagen. Then, the activity of the versicolorin B desaturase aflL leads to versicolorin A (VERA). A branch point starts from VERB since it can also be converted to dihydrodemethylsterigmatocystin (DMDHST), probably also by aflL, VERA being a precursor for aflatoxins B1 and G1, and DMDHST for aflatoxins B2 and G2. Next, the versicolorin reductase aflM and the cytochrome P450 monooxygenase aflN are involved in conversion of VERA to demethylsterigmatocystin (DMST). AflX and aflY seem also involved in this step, through probable aflX-mediated epoxide ring-opening step following versicolorin A oxidation and aflY-mediated Baeyer-Villiger oxidation required for the formation of the xanthone ring. The methyltransferase aflO then leads to the modification of DMST to sterigmatocystin (ST), and of DMDHST to dihydrosterigmatocystin (DHST). Both ST and DHST are then substrates of the O-methyltransferase aflP to yield O-methylsterigmatocystin (OMST) and dihydro-O-methylsterigmatocystin (DHOMST), respectively. Finally OMST is converted to aflatoxins B1 and G1, and DHOMST to aflatoxins B2 and G2, via the action of several enzymes including O-methylsterigmatocystin oxidoreductase aflQ, the cytochrome P450 monooxygenase aflU, but also the NADH-dependent flavin oxidoreductase nadA which is specifically required for the synthesis of AFG1. This is Norsolorinic acid reductase B from Aspergillus parasiticus (strain ATCC 56775 / NRRL 5862 / SRRC 143 / SU-1).